We begin with the raw amino-acid sequence, 1900 residues long: Phosphatidylinositol 4-kinase STT4 (1900 aa).

Ser-459 is subject to Phosphoserine. The 186-residue stretch at 1345–1530 (KIEGADSNEL…KPTLDRIRER (186 aa)) folds into the PIK helical domain. The pleckstrin homology (PH) domain conferring phosphoinositide binding specificity stretch occupies residues 1531–1648 (MVSSFSQSHR…EKWQAAIFKV (118 aa)). One can recognise a PI3K/PI4K catalytic domain in the interval 1617 to 1884 (FMATFKIKKD…LIRKSYESIF (268 aa)). A G-loop region spans residues 1623–1629 (IKKDVKD). The interval 1751-1759 (QFKDRHNGN) is catalytic loop. The tract at residues 1770 to 1794 (HIDFGFIFDIVPGGIKFEAVPFKLT) is activation loop.

Belongs to the PI3/PI4-kinase family. Type III PI4K subfamily.

The enzyme catalyses a 1,2-diacyl-sn-glycero-3-phospho-(1D-myo-inositol) + ATP = a 1,2-diacyl-sn-glycero-3-phospho-(1D-myo-inositol 4-phosphate) + ADP + H(+). Its function is as follows. Acts on phosphatidylinositol (PI) in the first committed step in the production of the second messenger inositol 1,4,5,-trisphosphate. STT4 functions in PKC1 protein kinase pathway. The polypeptide is Phosphatidylinositol 4-kinase STT4 (STT4) (Saccharomyces cerevisiae (strain ATCC 204508 / S288c) (Baker's yeast)).